We begin with the raw amino-acid sequence, 224 residues long: Octanoyl-[acyl-carrier-protein]:protein N-octanoyltransferase LIPT2, mitochondrial (224 aa).

Positions 37–217 constitute a BPL/LPL catalytic domain; sequence SNIPNTLLLC…AFTEQFNCTL (181 aa). Substrate contacts are provided by residues 81–88, 147–149, and 160–162; these read RGGLITFH, AIG, and GLA. The active-site Acyl-thioester intermediate is the C178.

Belongs to the LipB family.

The protein localises to the mitochondrion. It carries out the reaction octanoyl-[ACP] + L-lysyl-[protein] = N(6)-octanoyl-L-lysyl-[protein] + holo-[ACP] + H(+). It functions in the pathway protein modification; protein lipoylation via endogenous pathway; protein N(6)-(lipoyl)lysine from octanoyl-[acyl-carrier-protein]: step 1/2. Functionally, catalyzes the transfer of endogenously produced octanoic acid from octanoyl-acyl-carrier-protein (octanoyl-ACP) onto the lipoyl domains of lipoate-dependent enzymes such as the protein H of the glycine cleavage system (GCSH). Lipoyl-ACP can also act as a substrate although octanoyl-ACP is likely to be the physiological substrate. In Danio rerio (Zebrafish), this protein is Octanoyl-[acyl-carrier-protein]:protein N-octanoyltransferase LIPT2, mitochondrial (lipt2).